We begin with the raw amino-acid sequence, 205 residues long: MGTPKQPSLAPAHALGLRKSDPGIRSLGSDAGGRRWRPAAQSMFQIPEFEPSEQEDASTTDRGLGPSLTEDQPGPYLAPGLLGSIVQQQPGQAANNSHHGGAGTMETRSRHSSYPAGTEEDEGMEEELSPFRGRSRSAPPNLWAAQRYGRELRRMSDEFEGSFKGLPRPKSAGTATQMRQSASWTRIIQSWWDRNLGKGGSTPSQ.

Positions 1–139 are disordered; the sequence is MGTPKQPSLA…PFRGRSRSAP (139 aa). Serine 67 carries the phosphoserine modification. Positions 85-98 are enriched in polar residues; that stretch reads IVQQQPGQAANNSH. Serine 113 is subject to Phosphoserine. The segment covering 118-128 has biased composition (acidic residues); that stretch reads TEEDEGMEEEL. The residue at position 129 (serine 129) is a Phosphoserine. Asymmetric dimethylarginine; by PRMT1 is present on residues arginine 132 and arginine 134. At serine 135 the chain carries Phosphoserine. Serine 137 carries the phosphoserine; by PKA, PKB, PAK1, RPS6KA1, RPS6KB1 and PKC/PRKCQ modification. The BH3 motif lies at 148 to 162; it reads YGRELRRMSDEFEGS. Residues serine 156 and serine 171 each carry the phosphoserine modification. Residues 161–180 form a disordered region; sequence GSFKGLPRPKSAGTATQMRQ.

This sequence belongs to the Bcl-2 family. As to quaternary structure, forms heterodimers with the anti-apoptotic proteins, Bcl-X(L), Bcl-2 and Bcl-W. Also binds protein S100A10. The Ser-113/Ser-137 phosphorylated form binds 14-3-3 proteins. Interacts with AKT1 and PIM3. Interacts with HIF3A (via C-terminus domain); the interaction reduces the binding between BAD and BAX. Interacts (via BH3 domain) with NOL3 (via CARD domain); preventing the association of BAD with BCL2. Interacts with GIMAP3/IAN4 and GIMAP5/IAN5. Post-translationally, phosphorylated at one or more of Ser-113, Ser-137, Ser-156 and Ser-171 in response to survival stimuli, which blocks its pro-apoptotic activity. Phosphorylation on Ser-137 or Ser-113 promotes heterodimerization with 14-3-3 proteins. This interaction then facilitates the phosphorylation at Ser-156, a site within the BH3 motif, leading to the release of Bcl-X(L) and the promotion of cell survival. Ser-137 is the major site of AKT/PKB phosphorylation, Ser-156 the major site of protein kinase A (CAPK) phosphorylation. Methylation at Arg-132 and Arg-134 by PRMT1 inhibits Akt-mediated phosphorylation at Ser-137. In terms of tissue distribution, expressed in all tissues tested, including brain, liver, spleen and heart. In the brain, restricted to epithelial cells of the choroid plexus. Isoform alpha is the more abundant form.

The protein localises to the mitochondrion outer membrane. It localises to the cytoplasm. Promotes cell death. Successfully competes for the binding to Bcl-X(L), Bcl-2 and Bcl-W, thereby affecting the level of heterodimerization of these proteins with BAX. Can reverse the death repressor activity of Bcl-X(L), but not that of Bcl-2. Appears to act as a link between growth factor receptor signaling and the apoptotic pathways. The protein is Bcl2-associated agonist of cell death (Bad) of Rattus norvegicus (Rat).